Reading from the N-terminus, the 83-residue chain is Small ribosomal subunit protein bS20 (83 aa).

The segment at 1–25 is disordered; that stretch reads MPNIKSAIKRVNTTHTAEERNISQK. The segment covering 16 to 25 has biased composition (basic and acidic residues); it reads TAEERNISQK.

This sequence belongs to the bacterial ribosomal protein bS20 family.

In terms of biological role, binds directly to 16S ribosomal RNA. This chain is Small ribosomal subunit protein bS20, found in Staphylococcus saprophyticus subsp. saprophyticus (strain ATCC 15305 / DSM 20229 / NCIMB 8711 / NCTC 7292 / S-41).